A 190-amino-acid chain; its full sequence is dTTP/UTP pyrophosphatase (190 aa).

The active-site Proton acceptor is D71.

This sequence belongs to the Maf family. YhdE subfamily. A divalent metal cation is required as a cofactor.

The protein localises to the cytoplasm. It carries out the reaction dTTP + H2O = dTMP + diphosphate + H(+). The catalysed reaction is UTP + H2O = UMP + diphosphate + H(+). Its function is as follows. Nucleoside triphosphate pyrophosphatase that hydrolyzes dTTP and UTP. May have a dual role in cell division arrest and in preventing the incorporation of modified nucleotides into cellular nucleic acids. The polypeptide is dTTP/UTP pyrophosphatase (Xanthomonas campestris pv. campestris (strain ATCC 33913 / DSM 3586 / NCPPB 528 / LMG 568 / P 25)).